We begin with the raw amino-acid sequence, 122 residues long: MAKLDKNQLIESLKEMTIMEIDEIIKAVEEAFGVSATPVVAAGAVGGTQEAASEVTVKVTGYTDNAKLAVLKLYREIAGVGLMEAKTAVEKLPCVVKQDIKPEEAEELKKRFVEVGATVEIK.

This sequence belongs to the bacterial ribosomal protein bL12 family. Homodimer. Part of the ribosomal stalk of the 50S ribosomal subunit. Forms a multimeric L10(L12)X complex, where L10 forms an elongated spine to which 2 to 4 L12 dimers bind in a sequential fashion. Binds GTP-bound translation factors.

Functionally, forms part of the ribosomal stalk which helps the ribosome interact with GTP-bound translation factors. Is thus essential for accurate translation. This Mycoplasma pneumoniae (strain ATCC 29342 / M129 / Subtype 1) (Mycoplasmoides pneumoniae) protein is Large ribosomal subunit protein bL12.